A 268-amino-acid chain; its full sequence is UDP-2,3-diacylglucosamine hydrolase (268 aa).

Mn(2+) is bound by residues D25, H27, D58, N97, and H132. 97-98 (NR) contacts substrate. Positions 140, 178, 191, and 222 each coordinate substrate. H222 and H224 together coordinate Mn(2+).

This sequence belongs to the LpxH family. Requires Mn(2+) as cofactor.

The protein localises to the cell inner membrane. The catalysed reaction is UDP-2-N,3-O-bis[(3R)-3-hydroxytetradecanoyl]-alpha-D-glucosamine + H2O = 2-N,3-O-bis[(3R)-3-hydroxytetradecanoyl]-alpha-D-glucosaminyl 1-phosphate + UMP + 2 H(+). It participates in glycolipid biosynthesis; lipid IV(A) biosynthesis; lipid IV(A) from (3R)-3-hydroxytetradecanoyl-[acyl-carrier-protein] and UDP-N-acetyl-alpha-D-glucosamine: step 4/6. Hydrolyzes the pyrophosphate bond of UDP-2,3-diacylglucosamine to yield 2,3-diacylglucosamine 1-phosphate (lipid X) and UMP by catalyzing the attack of water at the alpha-P atom. Involved in the biosynthesis of lipid A, a phosphorylated glycolipid that anchors the lipopolysaccharide to the outer membrane of the cell. The chain is UDP-2,3-diacylglucosamine hydrolase from Ralstonia nicotianae (strain ATCC BAA-1114 / GMI1000) (Ralstonia solanacearum).